Here is a 505-residue protein sequence, read N- to C-terminus: Maturase K (505 aa).

Belongs to the intron maturase 2 family. MatK subfamily.

It is found in the plastid. Its subcellular location is the chloroplast. In terms of biological role, usually encoded in the trnK tRNA gene intron. Probably assists in splicing its own and other chloroplast group II introns. In Allamanda cathartica (Yellow allamanda), this protein is Maturase K.